The chain runs to 80 residues: MKIKDAVNMIRWKYREKIDDYVVIIIDRLTENGLKEISFSEIDDVDNNYLYLKSEENTVIPLHRVLMIKRKSDNALIWKR.

The protein belongs to the UPF0248 family.

This chain is UPF0248 protein M1425_2629, found in Saccharolobus islandicus (strain M.14.25 / Kamchatka #1) (Sulfolobus islandicus).